We begin with the raw amino-acid sequence, 338 residues long: Ketol-acid reductoisomerase (NADP(+)) (338 aa).

The region spanning 1–181 (MNIYYDKDCD…GGGRAGIIET (181 aa)) is the KARI N-terminal Rossmann domain. Residues 24 to 27 (YGSQ), Arg47, Ser50, Ser52, and 82 to 85 (DEHQ) contribute to the NADP(+) site. The active site involves His107. Position 133 (Gly133) interacts with NADP(+). The region spanning 182-327 (AFREETETDL…ERLRSMMPWI (146 aa)) is the KARI C-terminal knotted domain. Residues Asp190, Glu194, Glu226, and Glu230 each contribute to the Mg(2+) site. Ser251 contributes to the substrate binding site.

Belongs to the ketol-acid reductoisomerase family. Mg(2+) is required as a cofactor.

It carries out the reaction (2R)-2,3-dihydroxy-3-methylbutanoate + NADP(+) = (2S)-2-acetolactate + NADPH + H(+). The enzyme catalyses (2R,3R)-2,3-dihydroxy-3-methylpentanoate + NADP(+) = (S)-2-ethyl-2-hydroxy-3-oxobutanoate + NADPH + H(+). It functions in the pathway amino-acid biosynthesis; L-isoleucine biosynthesis; L-isoleucine from 2-oxobutanoate: step 2/4. The protein operates within amino-acid biosynthesis; L-valine biosynthesis; L-valine from pyruvate: step 2/4. Involved in the biosynthesis of branched-chain amino acids (BCAA). Catalyzes an alkyl-migration followed by a ketol-acid reduction of (S)-2-acetolactate (S2AL) to yield (R)-2,3-dihydroxy-isovalerate. In the isomerase reaction, S2AL is rearranged via a Mg-dependent methyl migration to produce 3-hydroxy-3-methyl-2-ketobutyrate (HMKB). In the reductase reaction, this 2-ketoacid undergoes a metal-dependent reduction by NADPH to yield (R)-2,3-dihydroxy-isovalerate. The protein is Ketol-acid reductoisomerase (NADP(+)) of Nitrosococcus oceani (strain ATCC 19707 / BCRC 17464 / JCM 30415 / NCIMB 11848 / C-107).